A 447-amino-acid polypeptide reads, in one-letter code: MAEDIETKVVKAKKASIELSSVSEEVKNRALEAMAESLDRERKAILEANSKDLEYASELKKVGKLTQALVDRLKVTDSKIDGMIAGIMDVIKLKDPVGETLSTLELDNDLILYQISCPIGLIGVIFESRPDVVPQVMSLCLKSGNATIFKGGSEARESNRTIFEILVKAIESTEGMPKGAFQLMETREEIMSLLSLDAYVDLLIPRGSNEFVKFIQDNTKIPVLGHTSGICHIYVDEFADPDTAWKVCFDAKVQYPAVCNAIETLLVNRKIAEAFLPKMAEMYIKAGVELRCDKDSYILLAEKGLSPLSKATEEDWSLEYNDLILSIKLVDTIKEAIAHINTFGSHHTDGIITENASRRKEFIGLVDSSSVMVNASTRFADGYRYGKGAEVGISTNKIHSRGPVGMEGLLIYKYILMGKGQVVADYAGENAKPYTHRKLDLKFADVN.

This sequence belongs to the gamma-glutamyl phosphate reductase family.

The protein localises to the cytoplasm. The enzyme catalyses L-glutamate 5-semialdehyde + phosphate + NADP(+) = L-glutamyl 5-phosphate + NADPH + H(+). The protein operates within amino-acid biosynthesis; L-proline biosynthesis; L-glutamate 5-semialdehyde from L-glutamate: step 2/2. Catalyzes the NADPH-dependent reduction of L-glutamate 5-phosphate into L-glutamate 5-semialdehyde and phosphate. The product spontaneously undergoes cyclization to form 1-pyrroline-5-carboxylate. This chain is Gamma-glutamyl phosphate reductase, found in Methanosarcina acetivorans (strain ATCC 35395 / DSM 2834 / JCM 12185 / C2A).